A 140-amino-acid polypeptide reads, in one-letter code: MLISRSSMPNLQKRHSDFKTPVYISRSISILNKIFHPCMYIYSRGITNDTYSSDTYELDWYDLGFVHFSKWVELAWCFLTLATWSFMKLLKTLRIVIYICTSDHWTHSLRFYYIELSKILLYLLICGVSLYGAIRIFINL.

Transmembrane regions (helical) follow at residues 63–83 (LGFV…TLAT) and 119–139 (ILLY…IFIN).

Its subcellular location is the membrane. This is an uncharacterized protein from Schizosaccharomyces pombe (strain 972 / ATCC 24843) (Fission yeast).